The primary structure comprises 239 residues: Ribosomal RNA small subunit methyltransferase G (239 aa).

S-adenosyl-L-methionine-binding positions include glycine 77, phenylalanine 82, alanine 128–glutamate 129, and arginine 146. Residues aspartate 215–lysine 239 are disordered.

The protein belongs to the methyltransferase superfamily. RNA methyltransferase RsmG family.

It localises to the cytoplasm. Specifically methylates the N7 position of guanine in position 535 of 16S rRNA. The sequence is that of Ribosomal RNA small subunit methyltransferase G from Staphylococcus aureus (strain USA300).